The following is a 508-amino-acid chain: DASH complex subunit ASK1 (508 aa).

Disordered regions lie at residues 86–138 (LVDG…TLSS) and 150–355 (SRAA…QLRS). Residues 116-138 (EPSQYTPRPQTSAGGHDTTTLSS) are compositionally biased toward polar residues. A compositionally biased stretch (basic and acidic residues) spans 161-175 (QHHDDSSVLTDRDGD). Residues 201-213 (DEMDIDMDEEDSE) are compositionally biased toward acidic residues. Positions 229–238 (RYYDDDHGFE) are enriched in basic and acidic residues. Residues 239 to 258 (QGEEEEDEEEEEEEEEEEEG) are compositionally biased toward acidic residues. A compositionally biased stretch (basic and acidic residues) spans 326 to 338 (IKQEDTEKKRPLW).

Belongs to the DASH complex ASK1 family. As to quaternary structure, component of the DASH complex consisting of ASK1, DAD1, DAD2, DAD3, DAD4, DAM1, DUO1, HSK3, SPC19 and SPC34, with a stoichiometry of one copy of each subunit per complex. Multiple DASH complexes oligomerize to form a ring that encircles spindle microtubules and organizes the rod-like NDC80 complexes of the outer kinetochore. On cytoplasmic microtubules, DASH complexes appear to form patches instead of rings.

The protein resides in the chromosome. The protein localises to the centromere. It is found in the kinetochore. Its subcellular location is the cytoplasm. It localises to the cytoskeleton. The protein resides in the spindle. The protein localises to the nucleus. In terms of biological role, component of the DASH complex that connects microtubules with kinetochores and couples microtubule depolymerisation to chromosome movement; it is involved in retrieving kinetochores to the spindle poles before their re-orientation on the spindle in early mitosis and allows microtubule depolymerization to pull chromosomes apart and resist detachment during anaphase. Kinetochores, consisting of a centromere-associated inner segment and a microtubule-contacting outer segment, play a crucial role in chromosome segregation by mediating the physical connection between centromeric DNA and microtubules. Kinetochores also serve as an input point for the spindle assembly checkpoint, which delays anaphase until all chromosomes have bioriented on the mitotic spindle. The sequence is that of DASH complex subunit ASK1 from Chaetomium thermophilum (strain DSM 1495 / CBS 144.50 / IMI 039719) (Thermochaetoides thermophila).